The chain runs to 307 residues: MRHFLTLKDFSAQEILEILALSKEIKDDLKKGIRPPLMQGKVLGMIFEKSSTRTRVSFESGIYQLGGMGMFLSNRDIQLGRGEPMKDTARVISRMVDMVMIRTSGHERIEEFAKYSQVPVVNGLTDSYHPVQLMADYLTMMEQGKDQNPIVAYVGDGNNMTHSWLMLASKLGFELRVATPRGYEPNLKIFEEAQKIASLSGAKITLTNDPKRAVEGADVVTTDTWASMGQEEEKEKRARDFQGYCVDSALMGLAKSDAIFLHCLPAYRGQEVSEEVLEGPQSLIFDEAENRLHVQKGIMVWLDRKRS.

Residues 51-54, glutamine 78, arginine 102, and 129-132 each bind carbamoyl phosphate; these read STRT and HPVQ. L-ornithine-binding positions include asparagine 159, aspartate 223, and 227 to 228; that span reads SM. Residues 263–264 and arginine 291 each bind carbamoyl phosphate; that span reads CL.

It belongs to the aspartate/ornithine carbamoyltransferase superfamily. OTCase family.

It localises to the cytoplasm. It catalyses the reaction carbamoyl phosphate + L-ornithine = L-citrulline + phosphate + H(+). Its pathway is amino-acid biosynthesis; L-arginine biosynthesis; L-arginine from L-ornithine and carbamoyl phosphate: step 1/3. Its function is as follows. Reversibly catalyzes the transfer of the carbamoyl group from carbamoyl phosphate (CP) to the N(epsilon) atom of ornithine (ORN) to produce L-citrulline. This chain is Ornithine carbamoyltransferase, found in Wolinella succinogenes (strain ATCC 29543 / DSM 1740 / CCUG 13145 / JCM 31913 / LMG 7466 / NCTC 11488 / FDC 602W) (Vibrio succinogenes).